A 346-amino-acid polypeptide reads, in one-letter code: UDP-N-acetylenolpyruvoylglucosamine reductase (346 aa).

The region spanning 23-194 (FDVRAQFACR…TSVTFRLPKV (172 aa)) is the FAD-binding PCMH-type domain. The active site involves arginine 170. The Proton donor role is filled by serine 246. Glutamate 342 is a catalytic residue.

Belongs to the MurB family. FAD serves as cofactor.

It localises to the cytoplasm. The enzyme catalyses UDP-N-acetyl-alpha-D-muramate + NADP(+) = UDP-N-acetyl-3-O-(1-carboxyvinyl)-alpha-D-glucosamine + NADPH + H(+). The protein operates within cell wall biogenesis; peptidoglycan biosynthesis. In terms of biological role, cell wall formation. This Paraburkholderia phytofirmans (strain DSM 17436 / LMG 22146 / PsJN) (Burkholderia phytofirmans) protein is UDP-N-acetylenolpyruvoylglucosamine reductase.